The primary structure comprises 403 residues: Arginine biosynthesis bifunctional protein ArgJ (403 aa).

Substrate contacts are provided by T149, K175, T186, E272, N398, and T403. Catalysis depends on T186, which acts as the Nucleophile.

Belongs to the ArgJ family. As to quaternary structure, heterotetramer of two alpha and two beta chains.

Its subcellular location is the cytoplasm. It carries out the reaction N(2)-acetyl-L-ornithine + L-glutamate = N-acetyl-L-glutamate + L-ornithine. The enzyme catalyses L-glutamate + acetyl-CoA = N-acetyl-L-glutamate + CoA + H(+). Its pathway is amino-acid biosynthesis; L-arginine biosynthesis; L-ornithine and N-acetyl-L-glutamate from L-glutamate and N(2)-acetyl-L-ornithine (cyclic): step 1/1. It functions in the pathway amino-acid biosynthesis; L-arginine biosynthesis; N(2)-acetyl-L-ornithine from L-glutamate: step 1/4. Its function is as follows. Catalyzes two activities which are involved in the cyclic version of arginine biosynthesis: the synthesis of N-acetylglutamate from glutamate and acetyl-CoA as the acetyl donor, and of ornithine by transacetylation between N(2)-acetylornithine and glutamate. The sequence is that of Arginine biosynthesis bifunctional protein ArgJ from Caldanaerobacter subterraneus subsp. tengcongensis (strain DSM 15242 / JCM 11007 / NBRC 100824 / MB4) (Thermoanaerobacter tengcongensis).